Reading from the N-terminus, the 404-residue chain is Multidrug resistance protein MdtG (404 aa).

Transmembrane regions (helical) follow at residues 19–39 (LGCFLTGAAFSLVMPFLPLYV), 56–76 (LVFSITFLFSAIASPFWGGLA), 90–110 (LGMAIVMLLMGMAQNIWQFLI), 113–133 (ALLGLLGGFIPNANALIATQA), 144–164 (TLSTGGVSGALLGPLAGGLLA), 171–191 (PVFFITASVLFICFLLTFFFI), 222–242 (LFVTTLIIQVATGSIAPILTL), 254–274 (IAFISGMIASVPGVAALLSAP), 288–308 (ILIVALIISVLLLIPMSFVQT), 317–337 (FLLGAADGALLPAVQTLLVYN), and 376–396 (AVFCVTAGVVLFNAIYSWNSL).

It belongs to the major facilitator superfamily. DHA1 family. MdtG (TC 2.A.1.2.20) subfamily.

Its subcellular location is the cell inner membrane. This chain is Multidrug resistance protein MdtG, found in Salmonella paratyphi A (strain ATCC 9150 / SARB42).